The chain runs to 284 residues: MTPAVTQTILTVRIARPHGYGYVLLSRGFSALNRPPPNYPGHIPLTTIERGALAVGSAIGSLLNPRRGDLIAALGEATATPYFIYRLRDAMLSDPTGRRILRDRPRISSKTLSIEYLRSLPPNTVGRTYVGWLDREGVGPDTRAPVQYIDDEECAYVMQRYRECHDFYHAITGLPVVVEGEVALKTFEFANTLLPMTGLSMFAVMRLKPAERERFWKLHLPWAIRSGLASKEVINVYWEEQLERDANELREELGIEKPADLREIRKMMRRQKAAEEAAKAKDGQ.

Residues His-165, Asp-166, His-169, and Glu-181 each contribute to the Zn(2+) site.

Belongs to the COQ4 family. In terms of assembly, component of a multi-subunit COQ enzyme complex, composed of at least COQ3, COQ4, COQ5, COQ6, COQ7 and COQ9. It depends on Zn(2+) as a cofactor.

Its subcellular location is the mitochondrion inner membrane. The enzyme catalyses a 4-hydroxy-3-methoxy-5-(all-trans-polyprenyl)benzoate + H(+) = a 2-methoxy-6-(all-trans-polyprenyl)phenol + CO2. It functions in the pathway cofactor biosynthesis; ubiquinone biosynthesis. Its function is as follows. Lyase that catalyzes the C1-decarboxylation of 4-hydroxy-3-methoxy-5-(all-trans-polyprenyl)benzoic acid into 2-methoxy-6-(all-trans-polyprenyl)phenol during ubiquinone biosynthesis. This chain is Ubiquinone biosynthesis protein COQ4, mitochondrial, found in Ajellomyces dermatitidis (strain ER-3 / ATCC MYA-2586) (Blastomyces dermatitidis).